Reading from the N-terminus, the 1009-residue chain is Probable beta-galactosidase B (1009 aa).

A signal peptide spans 1–21; the sequence is MAQLFTKIIVYFLLFASPLLA. The N-linked (GlcNAc...) asparagine glycan is linked to N28. Position 85 (Y85) interacts with substrate. A glycan (N-linked (GlcNAc...) asparagine) is linked at N95. Positions 130, 131, 132, and 190 each coordinate substrate. The active-site Proton donor is E191. N247 carries an N-linked (GlcNAc...) asparagine glycan. Residue Y260 coordinates substrate. C266 and C319 are joined by a disulfide. Residue E303 is the Nucleophile of the active site. Y368 is a binding site for substrate. 10 N-linked (GlcNAc...) asparagine glycosylation sites follow: N375, N406, N427, N451, N682, N740, N771, N784, N826, and N883.

It belongs to the glycosyl hydrolase 35 family.

Its subcellular location is the secreted. The enzyme catalyses Hydrolysis of terminal non-reducing beta-D-galactose residues in beta-D-galactosides.. In terms of biological role, cleaves beta-linked terminal galactosyl residues from gangliosides, glycoproteins, and glycosaminoglycans. The chain is Probable beta-galactosidase B (lacB) from Talaromyces marneffei (strain ATCC 18224 / CBS 334.59 / QM 7333) (Penicillium marneffei).